Consider the following 95-residue polypeptide: Aspartyl/glutamyl-tRNA(Asn/Gln) amidotransferase subunit C (95 aa).

It belongs to the GatC family. In terms of assembly, heterotrimer of A, B and C subunits.

The catalysed reaction is L-glutamyl-tRNA(Gln) + L-glutamine + ATP + H2O = L-glutaminyl-tRNA(Gln) + L-glutamate + ADP + phosphate + H(+). It catalyses the reaction L-aspartyl-tRNA(Asn) + L-glutamine + ATP + H2O = L-asparaginyl-tRNA(Asn) + L-glutamate + ADP + phosphate + 2 H(+). Its function is as follows. Allows the formation of correctly charged Asn-tRNA(Asn) or Gln-tRNA(Gln) through the transamidation of misacylated Asp-tRNA(Asn) or Glu-tRNA(Gln) in organisms which lack either or both of asparaginyl-tRNA or glutaminyl-tRNA synthetases. The reaction takes place in the presence of glutamine and ATP through an activated phospho-Asp-tRNA(Asn) or phospho-Glu-tRNA(Gln). This is Aspartyl/glutamyl-tRNA(Asn/Gln) amidotransferase subunit C from Chlorobium limicola (strain DSM 245 / NBRC 103803 / 6330).